Here is a 211-residue protein sequence, read N- to C-terminus: MEMIGGDDTDTEMYGALVTAQSLRLRHLHHCRENQCTSVLVKYIQAPVHLVWSLVRRFDQPQKYKPFISRCTVNGDPEIGCLREVNVKSGLPATTSTERLEQLDDEEHILGINIIGGDHRLKNYSSILTVHPEMIDGRSGTMVMESFVVDVPQGNTKDDTCYFVESLIKCNLKSLACVSERLAAQDITNSIATFCNASNGYREKNHTETNL.

The tract at residues 29 to 180 (HHCRENQCTS…NLKSLACVSE (152 aa)) is START-like. Disulfide bonds link cysteine 31–cysteine 161 and cysteine 36–cysteine 161. Residues lysine 65, 93 to 98 (ATTSTE), 120 to 126 (RLKNYSS), and glutamate 145 each bind abscisate. A Gate loop motif is present at residues 89–93 (SGLPA). The short motif at 119–121 (HRL) is the Latch loop element.

The protein belongs to the PYR/PYL/RCAR abscisic acid intracellular receptor family. As to quaternary structure, homodimer. Binds ABA on one subunit only. Binds to CARs protein in an ABA-independent manner, both at the plasma membrane and in the nucleus. Interacts with ABI1, and possibly with other PP2Cs.

Its subcellular location is the cytoplasm. It localises to the nucleus. It is found in the cell membrane. Functionally, receptor for abscisic acid (ABA) required for ABA-mediated responses such as stomatal closure and germination inhibition. Inhibits the activity of group-A protein phosphatases type 2C (PP2Cs) when activated by ABA. This Arabidopsis thaliana (Mouse-ear cress) protein is Abscisic acid receptor PYL7 (PYL7).